Reading from the N-terminus, the 210-residue chain is Lysine N-acyltransferase MbtK (210 aa).

His-130 contacts substrate. The Proton acceptor role is filled by Asp-168.

The protein belongs to the lysine N-acyltransferase MbtK family. As to quaternary structure, monomer.

Its pathway is siderophore biosynthesis; mycobactin biosynthesis. Acyltransferase required for the direct transfer of medium- to long-chain fatty acyl moieties from a carrier protein (MbtL) on to the epsilon-amino group of lysine residue in the mycobactin core. This Mycobacterium tuberculosis (strain CDC 1551 / Oshkosh) protein is Lysine N-acyltransferase MbtK (mbtK).